Reading from the N-terminus, the 80-residue chain is UPF0270 protein AHA_0994 (80 aa).

Belongs to the UPF0270 family.

In Aeromonas hydrophila subsp. hydrophila (strain ATCC 7966 / DSM 30187 / BCRC 13018 / CCUG 14551 / JCM 1027 / KCTC 2358 / NCIMB 9240 / NCTC 8049), this protein is UPF0270 protein AHA_0994.